The following is a 1193-amino-acid chain: DNA-directed RNA polymerase subunit beta (1193 aa).

A compositionally biased stretch (acidic residues) spans 1153 to 1162; the sequence is EMRDLEDDED. The disordered stretch occupies residues 1153-1193; it reads EMRDLEDDEDAKQNEGLSLPNDEESEELVSADAERDVVTKE. Over residues 1184–1193 the composition is skewed to basic and acidic residues; it reads DAERDVVTKE.

This sequence belongs to the RNA polymerase beta chain family. The RNAP catalytic core consists of 2 alpha, 1 beta, 1 beta' and 1 omega subunit. When a sigma factor is associated with the core the holoenzyme is formed, which can initiate transcription.

The enzyme catalyses RNA(n) + a ribonucleoside 5'-triphosphate = RNA(n+1) + diphosphate. Its function is as follows. DNA-dependent RNA polymerase catalyzes the transcription of DNA into RNA using the four ribonucleoside triphosphates as substrates. This chain is DNA-directed RNA polymerase subunit beta, found in Bacillus licheniformis (strain ATCC 14580 / DSM 13 / JCM 2505 / CCUG 7422 / NBRC 12200 / NCIMB 9375 / NCTC 10341 / NRRL NRS-1264 / Gibson 46).